Here is an 89-residue protein sequence, read N- to C-terminus: MSKKCALTGRKPRRGYSYAIRGISKKKKGIGLKVTGRTKRRFLPNMMTKRLWSTEENRFLKLKISAAALRLVDKLGLDKVVARAKSKGF.

Belongs to the bacterial ribosomal protein bL28 family.

This chain is Large ribosomal subunit protein bL28, found in Chlamydia muridarum (strain MoPn / Nigg).